The following is a 395-amino-acid chain: Acetate kinase (395 aa).

Asn-8 serves as a coordination point for Mg(2+). Position 15 (Lys-15) interacts with ATP. Position 94 (Arg-94) interacts with substrate. Asp-151 acts as the Proton donor/acceptor in catalysis. ATP-binding positions include 210–214, 284–286, and 329–333; these read HLGNG, DMR, and GIGEN. Glu-382 lines the Mg(2+) pocket.

This sequence belongs to the acetokinase family. In terms of assembly, homodimer. It depends on Mg(2+) as a cofactor. The cofactor is Mn(2+).

It is found in the cytoplasm. The enzyme catalyses acetate + ATP = acetyl phosphate + ADP. Its pathway is metabolic intermediate biosynthesis; acetyl-CoA biosynthesis; acetyl-CoA from acetate: step 1/2. Its function is as follows. Catalyzes the formation of acetyl phosphate from acetate and ATP. Can also catalyze the reverse reaction. This is Acetate kinase from Protochlamydia amoebophila (strain UWE25).